Consider the following 80-residue polypeptide: MIADVYIELKEGVADPEGEATLKALRLLGFKRVKKVSTVKVFRIDIEARSREEAEREIAEMCEKLLANPVIQKYSIVWRE.

It belongs to the PurS family. In terms of assembly, homodimer. Part of the FGAM synthase complex composed of 1 PurL, 1 PurQ and 2 PurS subunits.

Its subcellular location is the cytoplasm. It carries out the reaction N(2)-formyl-N(1)-(5-phospho-beta-D-ribosyl)glycinamide + L-glutamine + ATP + H2O = 2-formamido-N(1)-(5-O-phospho-beta-D-ribosyl)acetamidine + L-glutamate + ADP + phosphate + H(+). Its pathway is purine metabolism; IMP biosynthesis via de novo pathway; 5-amino-1-(5-phospho-D-ribosyl)imidazole from N(2)-formyl-N(1)-(5-phospho-D-ribosyl)glycinamide: step 1/2. Functionally, part of the phosphoribosylformylglycinamidine synthase complex involved in the purines biosynthetic pathway. Catalyzes the ATP-dependent conversion of formylglycinamide ribonucleotide (FGAR) and glutamine to yield formylglycinamidine ribonucleotide (FGAM) and glutamate. The FGAM synthase complex is composed of three subunits. PurQ produces an ammonia molecule by converting glutamine to glutamate. PurL transfers the ammonia molecule to FGAR to form FGAM in an ATP-dependent manner. PurS interacts with PurQ and PurL and is thought to assist in the transfer of the ammonia molecule from PurQ to PurL. The protein is Phosphoribosylformylglycinamidine synthase subunit PurS of Archaeoglobus fulgidus (strain ATCC 49558 / DSM 4304 / JCM 9628 / NBRC 100126 / VC-16).